The sequence spans 620 residues: Probable potassium transport system protein Kup 1 (620 aa).

The next 12 membrane-spanning stretches (helical) occupy residues 10-30 (LLIS…LYAL), 50-70 (VLSL…VIVI), 102-122 (MLLG…TPAI), 138-158 (LTPY…MIQK), 168-188 (FGPV…VNIV), 211-231 (MMSF…EALY), 246-266 (WFAL…ALLL), 284-304 (MVVP…QAVI), 336-356 (IYIP…VIGF), 368-388 (IAVT…MALM), 393-413 (WIAV…FFFA), and 415-435 (IIKV…SFTV).

The protein belongs to the HAK/KUP transporter (TC 2.A.72) family.

It localises to the cell inner membrane. The enzyme catalyses K(+)(in) + H(+)(in) = K(+)(out) + H(+)(out). Its function is as follows. Transport of potassium into the cell. Likely operates as a K(+):H(+) symporter. The protein is Probable potassium transport system protein Kup 1 of Rhodopseudomonas palustris (strain BisB18).